Here is a 400-residue protein sequence, read N- to C-terminus: Carbamoyl phosphate synthase small chain (400 aa).

Positions 1–199 are CPSase; sequence MSNETNANST…PYVIEAEGEA (199 aa). Serine 66, glycine 250, and glycine 252 together coordinate L-glutamine. The region spanning 200 to 395 is the Glutamine amidotransferase type-1 domain; it reads RHTVVAYDLG…VALMDEDSEN (196 aa). The Nucleophile role is filled by cysteine 278. The L-glutamine site is built by phenylalanine 279, glutamine 282, asparagine 320, glycine 322, and phenylalanine 323. Active-site residues include histidine 368 and glutamate 370.

The protein belongs to the CarA family. Composed of two chains; the small (or glutamine) chain promotes the hydrolysis of glutamine to ammonia, which is used by the large (or ammonia) chain to synthesize carbamoyl phosphate. Tetramer of heterodimers (alpha,beta)4.

It catalyses the reaction hydrogencarbonate + L-glutamine + 2 ATP + H2O = carbamoyl phosphate + L-glutamate + 2 ADP + phosphate + 2 H(+). The catalysed reaction is L-glutamine + H2O = L-glutamate + NH4(+). Its pathway is amino-acid biosynthesis; L-arginine biosynthesis; carbamoyl phosphate from bicarbonate: step 1/1. It functions in the pathway pyrimidine metabolism; UMP biosynthesis via de novo pathway; (S)-dihydroorotate from bicarbonate: step 1/3. Functionally, small subunit of the glutamine-dependent carbamoyl phosphate synthetase (CPSase). CPSase catalyzes the formation of carbamoyl phosphate from the ammonia moiety of glutamine, carbonate, and phosphate donated by ATP, constituting the first step of 2 biosynthetic pathways, one leading to arginine and/or urea and the other to pyrimidine nucleotides. The small subunit (glutamine amidotransferase) binds and cleaves glutamine to supply the large subunit with the substrate ammonia. In Corynebacterium efficiens (strain DSM 44549 / YS-314 / AJ 12310 / JCM 11189 / NBRC 100395), this protein is Carbamoyl phosphate synthase small chain.